Consider the following 211-residue polypeptide: High frequency lysogenization protein HflD homolog (211 aa).

The protein belongs to the HflD family.

It is found in the cytoplasm. The protein localises to the cell membrane. This Buchnera aphidicola subsp. Acyrthosiphon pisum (strain 5A) protein is High frequency lysogenization protein HflD homolog.